A 63-amino-acid chain; its full sequence is Small, acid-soluble spore protein H 2 (63 aa).

Belongs to the SspH family.

It is found in the spore core. This Clostridium botulinum (strain ATCC 19397 / Type A) protein is Small, acid-soluble spore protein H 2.